We begin with the raw amino-acid sequence, 90 residues long: Probable Fe(2+)-trafficking protein (90 aa).

It belongs to the Fe(2+)-trafficking protein family.

In terms of biological role, could be a mediator in iron transactions between iron acquisition and iron-requiring processes, such as synthesis and/or repair of Fe-S clusters in biosynthetic enzymes. This Hydrogenovibrio crunogenus (strain DSM 25203 / XCL-2) (Thiomicrospira crunogena) protein is Probable Fe(2+)-trafficking protein.